Here is a 174-residue protein sequence, read N- to C-terminus: uncharacterized protein (174 aa).

The disordered stretch occupies residues 1-55; that stretch reads MGCVVSKSDDIKNENESRQRNQASSSQQPSSSQTPSKQIGIAAKDSEEQPQEVSY. Glycine 2 is lipidated: N-myristoyl glycine. The span at 7 to 19 shows a compositional bias: basic and acidic residues; that stretch reads KSDDIKNENESRQ. Residues 20–38 are compositionally biased toward low complexity; it reads RNQASSSQQPSSSQTPSKQ.

This is an uncharacterized protein from Dictyostelium discoideum (Social amoeba).